The chain runs to 257 residues: Acyl-[acyl-carrier-protein]--UDP-N-acetylglucosamine O-acyltransferase (257 aa).

Belongs to the transferase hexapeptide repeat family. LpxA subfamily. Homotrimer.

Its subcellular location is the cytoplasm. The catalysed reaction is a (3R)-hydroxyacyl-[ACP] + UDP-N-acetyl-alpha-D-glucosamine = a UDP-3-O-[(3R)-3-hydroxyacyl]-N-acetyl-alpha-D-glucosamine + holo-[ACP]. The protein operates within glycolipid biosynthesis; lipid IV(A) biosynthesis; lipid IV(A) from (3R)-3-hydroxytetradecanoyl-[acyl-carrier-protein] and UDP-N-acetyl-alpha-D-glucosamine: step 1/6. In terms of biological role, involved in the biosynthesis of lipid A, a phosphorylated glycolipid that anchors the lipopolysaccharide to the outer membrane of the cell. In Anaeromyxobacter dehalogenans (strain 2CP-1 / ATCC BAA-258), this protein is Acyl-[acyl-carrier-protein]--UDP-N-acetylglucosamine O-acyltransferase.